The primary structure comprises 313 residues: Ribosomal RNA small subunit methyltransferase H (313 aa).

S-adenosyl-L-methionine-binding positions include 35–37, Asp55, Phe79, Asp101, and Gln108; that span reads GGH.

The protein belongs to the methyltransferase superfamily. RsmH family.

Its subcellular location is the cytoplasm. It catalyses the reaction cytidine(1402) in 16S rRNA + S-adenosyl-L-methionine = N(4)-methylcytidine(1402) in 16S rRNA + S-adenosyl-L-homocysteine + H(+). In terms of biological role, specifically methylates the N4 position of cytidine in position 1402 (C1402) of 16S rRNA. The sequence is that of Ribosomal RNA small subunit methyltransferase H from Edwardsiella ictaluri (strain 93-146).